Here is a 356-residue protein sequence, read N- to C-terminus: uncharacterized protein (356 aa).

6 helical membrane-spanning segments follow: residues 2–22 (FEAF…FHRL), 35–55 (AYVT…PIPY), 74–94 (FTNM…EIVV), 99–119 (IMYG…GPFL), 124–144 (VLSL…VALV), and 154–174 (IILI…FVDI). Positions 218 to 353 (QSIALLLIDI…GRNKVMFNPI (136 aa)) constitute a GGDEF domain.

The protein localises to the cell membrane. This is an uncharacterized protein from Staphylococcus aureus (strain bovine RF122 / ET3-1).